The chain runs to 348 residues: Type II methyltransferase M.BglI (348 aa).

The protein belongs to the N(4)/N(6)-methyltransferase family.

The enzyme catalyses a 2'-deoxycytidine in DNA + S-adenosyl-L-methionine = an N(4)-methyl-2'-deoxycytidine in DNA + S-adenosyl-L-homocysteine + H(+). A beta subtype methylase, recognizes the double-stranded sequence 5'-GCCNNNNNGGC-3', methylates C-2 on both strands, and protects the DNA from cleavage by the BglI endonuclease. The chain is Type II methyltransferase M.BglI (bglIM) from Bacillus subtilis.